The following is a 142-amino-acid chain: Transcription antitermination protein NusB (142 aa).

It belongs to the NusB family.

In terms of biological role, involved in transcription antitermination. Required for transcription of ribosomal RNA (rRNA) genes. Binds specifically to the boxA antiterminator sequence of the ribosomal RNA (rrn) operons. The protein is Transcription antitermination protein NusB of Thermotoga sp. (strain RQ2).